A 263-amino-acid chain; its full sequence is Acyl-[acyl-carrier-protein]--UDP-N-acetylglucosamine O-acyltransferase (263 aa).

Belongs to the transferase hexapeptide repeat family. LpxA subfamily. As to quaternary structure, homotrimer.

The protein localises to the cytoplasm. It carries out the reaction a (3R)-hydroxyacyl-[ACP] + UDP-N-acetyl-alpha-D-glucosamine = a UDP-3-O-[(3R)-3-hydroxyacyl]-N-acetyl-alpha-D-glucosamine + holo-[ACP]. The protein operates within glycolipid biosynthesis; lipid IV(A) biosynthesis; lipid IV(A) from (3R)-3-hydroxytetradecanoyl-[acyl-carrier-protein] and UDP-N-acetyl-alpha-D-glucosamine: step 1/6. Its function is as follows. Involved in the biosynthesis of lipid A, a phosphorylated glycolipid that anchors the lipopolysaccharide to the outer membrane of the cell. The polypeptide is Acyl-[acyl-carrier-protein]--UDP-N-acetylglucosamine O-acyltransferase (Caulobacter vibrioides (strain ATCC 19089 / CIP 103742 / CB 15) (Caulobacter crescentus)).